We begin with the raw amino-acid sequence, 867 residues long: DNA mismatch repair protein MutS (867 aa).

Residue 609–616 (GPNMSGKS) participates in ATP binding.

Belongs to the DNA mismatch repair MutS family.

In terms of biological role, this protein is involved in the repair of mismatches in DNA. It is possible that it carries out the mismatch recognition step. This protein has a weak ATPase activity. This is DNA mismatch repair protein MutS from Latilactobacillus sakei subsp. sakei (strain 23K) (Lactobacillus sakei subsp. sakei).